Reading from the N-terminus, the 799-residue chain is Probable inorganic carbon transporter subunit DabA (799 aa).

Residues cysteine 303, aspartate 305, histidine 479, and cysteine 494 each coordinate Zn(2+). Residues 574-598 (AGAAAERSEALNGADPDKGVSETAS) form a disordered region.

It belongs to the inorganic carbon transporter (TC 9.A.2) DabA family. Forms a complex with DabB. It depends on Zn(2+) as a cofactor.

It localises to the cell membrane. Its function is as follows. Part of an energy-coupled inorganic carbon pump. The chain is Probable inorganic carbon transporter subunit DabA from Natronomonas pharaonis (strain ATCC 35678 / DSM 2160 / CIP 103997 / JCM 8858 / NBRC 14720 / NCIMB 2260 / Gabara) (Halobacterium pharaonis).